Reading from the N-terminus, the 449-residue chain is Tubulin alpha chain (449 aa).

Positions 1 to 4 (MREC) match the MREC motif motif. Gln-11 is a GTP binding site. Lys-40 is subject to N6-acetyllysine. GTP is bound by residues Glu-71, Ser-140, Gly-144, Thr-145, Thr-179, Asn-206, and Asn-228. Glu-71 serves as a coordination point for Mg(2+). Glu-254 is a catalytic residue. 5-glutamyl polyglutamate is present on Glu-443.

The protein belongs to the tubulin family. In terms of assembly, dimer of alpha and beta chains. A typical microtubule is a hollow water-filled tube with an outer diameter of 25 nm and an inner diameter of 15 nM. Alpha-beta heterodimers associate head-to-tail to form protofilaments running lengthwise along the microtubule wall with the beta-tubulin subunit facing the microtubule plus end conferring a structural polarity. Microtubules usually have 13 protofilaments but different protofilament numbers can be found in some organisms and specialized cells. The cofactor is Mg(2+). In terms of processing, some glutamate residues at the C-terminus are polyglycylated, resulting in polyglycine chains on the gamma-carboxyl group. Glycylation is mainly limited to tubulin incorporated into axonemes (cilia and flagella) whereas glutamylation is prevalent in neuronal cells, centrioles, axonemes, and the mitotic spindle. Both modifications can coexist on the same protein on adjacent residues, and lowering polyglycylation levels increases polyglutamylation, and reciprocally. The precise function of polyglycylation is still unclear. Some glutamate residues at the C-terminus are polyglutamylated, resulting in polyglutamate chains on the gamma-carboxyl group. Polyglutamylation plays a key role in microtubule severing by spastin (SPAST). SPAST preferentially recognizes and acts on microtubules decorated with short polyglutamate tails: severing activity by SPAST increases as the number of glutamates per tubulin rises from one to eight, but decreases beyond this glutamylation threshold. Post-translationally, acetylation of alpha chains at Lys-40 is located inside the microtubule lumen. This modification has been correlated with increased microtubule stability, intracellular transport and ciliary assembly. In terms of processing, undergoes a tyrosination/detyrosination cycle, the cyclic removal and re-addition of a C-terminal tyrosine residue by the enzymes tubulin tyrosine carboxypeptidase (MATCAP1, VASH1 or VASH2) and tubulin tyrosine ligase (TTL), respectively. Tyrosination promotes microtubule interaction with CAP-Gly microtubule plus-end tracking proteins. Tyrosinated tubulins regulate the initiation of dynein-driven motility. Post-translationally, detyrosination is involved in metaphase plate congression by guiding chromosomes during mitosis. Detyrosination increases microtubules-dependent mechanotransduction in dystrophic cardiac and skeletal muscle. In cardiomyocytes, detyrosinated microtubules are required to resist to contractile compression during contraction.

It is found in the cytoplasm. The protein resides in the cytoskeleton. It carries out the reaction GTP + H2O = GDP + phosphate + H(+). In terms of biological role, tubulin is the major constituent of microtubules, a cylinder consisting of laterally associated linear protofilaments composed of alpha- and beta-tubulin heterodimers. Microtubules grow by the addition of GTP-tubulin dimers to the microtubule end, where a stabilizing cap forms. Below the cap, tubulin dimers are in GDP-bound state, owing to GTPase activity of alpha-tubulin. The protein is Tubulin alpha chain (tuba) of Xenopus tropicalis (Western clawed frog).